A 284-amino-acid chain; its full sequence is Tegument protein VP22 (284 aa).

2 disordered regions span residues 1 to 126 (MSYY…WSID) and 239 to 284 (LYAS…SRRR). Over residues 74-83 (SRDDDDRRQP) the composition is skewed to basic and acidic residues. A compositionally biased stretch (basic residues) spans 94–108 (ERRKSQTTVTTRRKT). Positions 115–126 (KSSNSNGPWSID) are enriched in polar residues.

The protein belongs to the alphaherpesvirinae VP22 tegument protein family. Interacts with gE (via C-terminus); this interaction is necessary for the recruitment of VP22 to the Golgi and its packaging into virions. Interacts with gM (via C-terminus). Interacts with VP16; this interaction allows the formation of a tripartite complex composed of VP16, VP22 and UL41/VHS. Interacts with the capsid-binding protein UL16. Interacts with host CGAS. Post-translationally, highly phosphorylated in the host cell. Packaging is selective for underphosphorylated forms.

It localises to the virion tegument. It is found in the host cytoplasm. Its subcellular location is the host nucleus. The protein localises to the host Golgi apparatus. Its function is as follows. Tegument protein that plays different roles during the time course of infection. Participates in both the accumulation of viral mRNAs and viral protein translation at late time of infection. Modulates the RNase activity of the virion host shutoff protein UL41 probably to ensure necessary levels of key cellular mRNAs and proteins. Plays a role in microtubule reorganization that occurs after viral infection by stabilizing microtubule network. Plays a role in the inhibition of host innate immune system by targeting the CGAS enzymatic activity which is the principal cytosolic DNA sensor that detects invading viral DNA. Acts by mediating disruption of liquid-like droplets in which CGAS is activated, thereby preventing CGAS activity. The protein is Tegument protein VP22 (UL49) of Amazona oratrix (yellow-headed parrot).